We begin with the raw amino-acid sequence, 321 residues long: tRNA-dihydrouridine synthase B (321 aa).

Residues 16-18 (PMA) and Q70 each bind FMN. C100 acts as the Proton donor in catalysis. FMN contacts are provided by residues K139, 200-202 (NGD), and 224-225 (GR).

The protein belongs to the Dus family. DusB subfamily. FMN is required as a cofactor.

It catalyses the reaction a 5,6-dihydrouridine in tRNA + NAD(+) = a uridine in tRNA + NADH + H(+). It carries out the reaction a 5,6-dihydrouridine in tRNA + NADP(+) = a uridine in tRNA + NADPH + H(+). Catalyzes the synthesis of 5,6-dihydrouridine (D), a modified base found in the D-loop of most tRNAs, via the reduction of the C5-C6 double bond in target uridines. In Pectobacterium carotovorum (Erwinia carotovora), this protein is tRNA-dihydrouridine synthase B.